Reading from the N-terminus, the 343-residue chain is ABC transporter riboflavin-binding protein RfuA (343 aa).

A signal peptide spans 1 to 19 (MNGAVCVLSALIAVFTCFS). The N-palmitoyl cysteine moiety is linked to residue Cys-20. The S-diacylglycerol cysteine moiety is linked to residue Cys-20. Riboflavin-binding positions include 43 to 46 (SPVY), Asp-124, Gln-140, Tyr-176, Trp-208, and Asp-255.

This sequence belongs to the BMP lipoprotein family. Monomer in solution. The complex is probably composed of two ATP-binding proteins (RfuB), two transmembrane proteins (RfuC and RfuD) and a solute-binding protein (RfuA).

The protein resides in the cell inner membrane. Functionally, probably part of the ABC transporter complex RfuABCD involved in riboflavin import. Binds riboflavin. The sequence is that of ABC transporter riboflavin-binding protein RfuA from Treponema pallidum (strain Nichols).